Consider the following 363-residue polypeptide: Two-pore potassium channel 1 (363 aa).

A disordered region spans residues 1–61 (MSSDAARTPL…DDVKIDEPPP (61 aa)). The Cytoplasmic portion of the chain corresponds to 1–78 (MSSDAARTPL…FSDLNPNLRR (78 aa)). Residues 31 to 42 (SSRKRRLRRSRS) show a composition bias toward basic residues. Residues 79–99 (VIMFLALYLTIGTLCFYLVRD) traverse the membrane as a helical segment. Positions 111–130 (DALYFCIVTMTTVGYGDLVP) form an intramembrane region, pore-forming. A helical membrane pass occupies residues 137 to 157 (LLACAFVFSGMVLVGHLLSRA). Topologically, residues 158–197 (ADYLVEKQEALLVRAFHLRQSFGPTDILKELHTNKLRYKC) are cytoplasmic. Residues 198 to 218 (YATCLVLVVLFIVGTIFLVMV) form a helical membrane-spanning segment. The pore-forming intramembrane region spans 225 to 244 (SAFYCVCSTVTTLGYGDKSF). The chain crosses the membrane as a helical span at residues 251–271 (LFAVFWILTSSICLAQFFLYV). The Cytoplasmic segment spans residues 272–363 (AELNTENKQR…LAQTTSQIQR (92 aa)). EF-hand domains are found at residues 288-323 (LTRR…EMGK) and 327-362 (KDIS…SQIQ). Residues 296–298 (DLE) carry the Endoplasmic reticulum release signal motif. Residues Asp301, Asp303, Asp305, Glu312, Asp340, Asp342, Ser344, Thr346, and Asp351 each contribute to the Ca(2+) site.

Belongs to the two pore domain potassium channel (TC 1.A.1.7) family. As to quaternary structure, homodimer. Interacts with GRF1 and GRF6, but only GRF6 modulates the channel activity. Phosphorylation at Ser-42 increases and stabilizes the interaction with 14-3-3 proteins. Detected in mesophyll cells, guard cells and vascular tissues of the leaves. Expressed in the hilum, where the funiculus is attached during fruit maturation and in the embryo. Also expressed at a lower level in seedlings, root tips and elongation zones, and flowers. Could be detected in mitotically active tissues.

The protein resides in the vacuole membrane. Its activity is regulated as follows. Could be activated by protein kinase C. Strongly induced by calcium. Blocked by barium, tetraethylammonium (TEA), quinine and quinidine. In terms of biological role, voltage-independent, large conductance and potassium-selective tonoplast ion channel. Regulated by cytoplasmic calcium and pH. Does not mediate slow-vacuolar (SV) ionic currents, but essential to establish VK currents. Has some permeability for Rb(+) and NH(4)(+), but none for Na(+), Cs(+) or Li(+). Involved in intracellular K(+) redistribution and/or K(+) retranslocation between different tissues. The chain is Two-pore potassium channel 1 (TPK1) from Arabidopsis thaliana (Mouse-ear cress).